Reading from the N-terminus, the 204-residue chain is FMN-dependent NADH:quinone oxidoreductase (204 aa).

Residues S9, 15–17 (SVS), and 97–100 (MYNF) contribute to the FMN site.

It belongs to the azoreductase type 1 family. As to quaternary structure, homodimer. It depends on FMN as a cofactor.

It catalyses the reaction 2 a quinone + NADH + H(+) = 2 a 1,4-benzosemiquinone + NAD(+). The enzyme catalyses N,N-dimethyl-1,4-phenylenediamine + anthranilate + 2 NAD(+) = 2-(4-dimethylaminophenyl)diazenylbenzoate + 2 NADH + 2 H(+). Quinone reductase that provides resistance to thiol-specific stress caused by electrophilic quinones. In terms of biological role, also exhibits azoreductase activity. Catalyzes the reductive cleavage of the azo bond in aromatic azo compounds to the corresponding amines. This is FMN-dependent NADH:quinone oxidoreductase from Methylobacterium radiotolerans (strain ATCC 27329 / DSM 1819 / JCM 2831 / NBRC 15690 / NCIMB 10815 / 0-1).